A 397-amino-acid chain; its full sequence is Phosphoglycerate kinase (397 aa).

Substrate contacts are provided by residues 21–23, R37, 60–63, R119, and R152; these read DFN and HLGR. Residues K203, G294, E325, and 354–357 each bind ATP; that span reads GGDS.

The protein belongs to the phosphoglycerate kinase family. In terms of assembly, monomer.

Its subcellular location is the cytoplasm. The catalysed reaction is (2R)-3-phosphoglycerate + ATP = (2R)-3-phospho-glyceroyl phosphate + ADP. It functions in the pathway carbohydrate degradation; glycolysis; pyruvate from D-glyceraldehyde 3-phosphate: step 2/5. The chain is Phosphoglycerate kinase from Pelodictyon phaeoclathratiforme (strain DSM 5477 / BU-1).